Here is a 390-residue protein sequence, read N- to C-terminus: L-serine phosphate decarboxylase Cj1436c (390 aa).

Position 243 is an N6-(pyridoxal phosphate)lysine (lysine 243).

It belongs to the class-I pyridoxal-phosphate-dependent aminotransferase family. It depends on pyridoxal 5'-phosphate as a cofactor.

It catalyses the reaction O-phospho-L-serine + H(+) = phosphoethanolamine + CO2. The protein operates within capsule biogenesis; capsule polysaccharide biosynthesis. In terms of biological role, pyridoxal phosphate (PLP)-dependent decarboxylase involved in the biosynthesis of amidated D-glucuronic acid structures found on the capsular polysaccharide (CPS) of C.jejuni. Catalyzes the decarboxylation of L-serine phosphate to ethanolamine phosphate. Less active with L-threonine phosphate. No activity with L-serine, L-threonine, L-aspartate or L-glutamate. The polypeptide is L-serine phosphate decarboxylase Cj1436c (Campylobacter jejuni subsp. jejuni serotype O:2 (strain ATCC 700819 / NCTC 11168)).